We begin with the raw amino-acid sequence, 416 residues long: Serine/threonine transporter SstT (416 aa).

Transmembrane regions (helical) follow at residues 15–35 (SLVS…MFMP), 49–69 (VGAL…AAII), 82–102 (ILLL…VASF), 141–161 (ALMD…GIAM), 192–212 (LGIL…ALFG), 217–237 (LVVL…IIVF), 288–308 (VSIP…ITVL), 330–350 (VVAT…LLLI), and 356–376 (LFGI…IIGV).

This sequence belongs to the dicarboxylate/amino acid:cation symporter (DAACS) (TC 2.A.23) family.

The protein resides in the cell inner membrane. The enzyme catalyses L-serine(in) + Na(+)(in) = L-serine(out) + Na(+)(out). It carries out the reaction L-threonine(in) + Na(+)(in) = L-threonine(out) + Na(+)(out). Involved in the import of serine and threonine into the cell, with the concomitant import of sodium (symport system). This chain is Serine/threonine transporter SstT, found in Aeromonas salmonicida (strain A449).